We begin with the raw amino-acid sequence, 436 residues long: Putative permease MJ0326 (436 aa).

The next 12 membrane-spanning stretches (helical) occupy residues 24–44 (LAGI…PQIL), 51–71 (FGAV…VMGL), 79–99 (LAPG…GMGI), 103–123 (VALG…LTKI), 139–159 (TAVG…GIIV), 171–191 (LMEP…ILVS), 194–214 (VIGA…ILGI), 235–255 (LDIM…FFFV), 322–342 (GFVS…YPVV), 345–365 (IPPY…MRSV), 381–401 (ITLL…LGFI), and 416–436 (VHWL…YLSG).

It belongs to the nucleobase:cation symporter-2 (NCS2) (TC 2.A.40) family. Azg-like subfamily.

The protein resides in the cell membrane. This chain is Putative permease MJ0326, found in Methanocaldococcus jannaschii (strain ATCC 43067 / DSM 2661 / JAL-1 / JCM 10045 / NBRC 100440) (Methanococcus jannaschii).